Here is a 339-residue protein sequence, read N- to C-terminus: Annexin A2 (339 aa).

S2 bears the N-acetylserine mark. The segment at 2 to 24 (STVHEILCKLSLEGDHSTPPSAY) is S100A10-binding site. Y24 bears the Phosphotyrosine; by SRC mark. S26 carries the phosphoserine; by PKC modification. Annexin repeat units lie at residues 33-104 (FDAE…GLLK) and 105-176 (TPAQ…ALAK). K49 is modified (N6-acetyllysine; alternate). A Glycyl lysine isopeptide (Lys-Gly) (interchain with G-Cter in SUMO1); alternate cross-link involves residue K49. A Glycyl lysine isopeptide (Lys-Gly) (interchain with G-Cter in SUMO2); alternate cross-link involves residue K49. K152 carries the post-translational modification N6-acetyllysine. At S184 the chain carries Phosphoserine. 2 Annexin repeats span residues 189-261 (ELID…NLVQ) and 265-336 (NKPL…YLCG). Y199 is subject to Phosphotyrosine. At K227 the chain carries N6-acetyllysine.

The protein belongs to the annexin family. Heterotetramer containing 2 light chains of S100A10/p11 and 2 heavy chains of ANXA2/p36. Interacts with ATP1B1. Interacts with DYSF. Interacts with COCH. Interacts (via repeat Annexin 1) with PCSK9 (via the C-terminal domain); the interaction inhibits the degradation of LDLR. Interacts with CEACAM1 (via the cytoplasmic domain); this interaction is regulated by phosphorylation of CEACAM1. Interacts with APPL2 and APPL1; targets APPL2 to endosomes and acting in parallel to RAB5A. Interacts with S100A4. May interact with UBAP2. Interacts with PLEKHG4B; this interaction is required for PLEKHG4B localization to cell-cell adhesions. In terms of processing, ISGylated.

The protein resides in the secreted. The protein localises to the extracellular space. It is found in the extracellular matrix. Its subcellular location is the basement membrane. It localises to the melanosome. In terms of biological role, calcium-regulated membrane-binding protein whose affinity for calcium is greatly enhanced by anionic phospholipids. It binds two calcium ions with high affinity. May be involved in heat-stress response. Inhibits PCSK9-enhanced LDLR degradation, probably reduces PCSK9 protein levels via a translational mechanism but also competes with LDLR for binding with PCSK9. Binds to endosomes damaged by phagocytosis of particulate wear debris and participates in endosomal membrane stabilization, thereby limiting NLRP3 inflammasome activation. Required for endothelial cell surface plasmin generation and may support fibrinolytic surveillance and neoangiogenesis. The polypeptide is Annexin A2 (ANXA2) (Bos taurus (Bovine)).